The chain runs to 409 residues: uncharacterized protein (409 aa).

10 helical membrane passes run 53 to 73 (IITLVGLLCNIGMYLIMYVHC), 83 to 103 (WCYFAVAFLIFAYQTLDNVDG), 115 to 135 (LGELFDHVCDALSVAMFAIVM), 141 to 161 (IGPYWTFFSFIVGMWPFYLAH), 183 to 203 (VLFMIIEIITGIFGSDIWTYG), 205 to 225 (STTVGKIATVFVSIGAVVTCL), 243 to 263 (CLLQLTPICLFTALIVIWASV), 265 to 285 (NLITEQPHLFIMTLGILFGYI), 299 to 319 (CSLFYPIFVPIIIVVLNSILA), and 329 to 349 (TVALWILFSIACAQFLLFSYF). The span at 388 to 401 (EEGSSSIGNSTDDI) shows a compositional bias: polar residues. A disordered region spans residues 388 to 409 (EEGSSSIGNSTDDINPSEIEEI).

The protein belongs to the CDP-alcohol phosphatidyltransferase class-I family.

It localises to the membrane. This is an uncharacterized protein from Dictyostelium discoideum (Social amoeba).